Consider the following 251-residue polypeptide: Prolactin-7B1 (251 aa).

The first 29 residues, 1 to 29 (MHLSLTQQCLWPLQILLVSNLLLWENVAA), serve as a signal peptide directing secretion. N-linked (GlcNAc...) asparagine glycosylation is present at Asn73. 2 cysteine pairs are disulfide-bonded: Cys100-Cys216 and Cys233-Cys241.

It belongs to the somatotropin/prolactin family.

It localises to the secreted. The chain is Prolactin-7B1 (Prl7b1) from Rattus norvegicus (Rat).